The following is a 499-amino-acid chain: Type-1 glutamine synthetase 1 (499 aa).

Residues 50-146 enclose the GS beta-grasp domain; it reads PQLKFIRVCW…IFGEFFYLDN (97 aa). A GS catalytic domain is found at 158-499; it reads PRNSLQRAID…DQILKLLELF (342 aa).

It belongs to the glutamine synthetase family.

It catalyses the reaction L-glutamate + NH4(+) + ATP = L-glutamine + ADP + phosphate + H(+). The chain is Type-1 glutamine synthetase 1 (glnA1) from Dictyostelium discoideum (Social amoeba).